Consider the following 611-residue polypeptide: MFS siderochrome iron transporter C (611 aa).

The tract at residues 1 to 25 (MPFLDHRTGPSYGTIDQMEQHSDDE) is disordered. Residue Asn-62 is glycosylated (N-linked (GlcNAc...) asparagine). Transmembrane regions (helical) follow at residues 71–91 (VIAY…GQTV), 107–127 (LIST…PPMA), 136–156 (FEAF…MAAS), 165–185 (AQIF…VFIA), 194–214 (AFLA…GPTI), 228–248 (YGMW…SLLL), 282–302 (MGGL…LTLA), 313–333 (SIVA…FWES), 353–373 (ALAG…SVQP), 393–413 (VTQT…ILIK), 418–438 (YRAF…LMMV), 449–469 (ILVT…PVQL), 486–506 (MFLT…GAVW), and 560–580 (LLIL…AMED). A disordered region spans residues 592–611 (VDPVPAEEGEIEPNRHVKRT).

Belongs to the major facilitator superfamily.

It is found in the membrane. In terms of biological role, major facilitator transporter that contributes to the maintenance of intracellular siderophore ferricrocin (FC) levels. Plays a role in conidiation and confers protection against oxidative stress. Also contributes to fungal virulence in the Galleria mellonella animal model system. Does not appear to play a role in either siderophore export or uptake. The chain is MFS siderochrome iron transporter C from Aspergillus fumigatus (strain ATCC MYA-4609 / CBS 101355 / FGSC A1100 / Af293) (Neosartorya fumigata).